The chain runs to 128 residues: Large ribosomal subunit protein uL22 (128 aa).

Residues 1 to 20 form a disordered region; the sequence is MANGHRSQIKRERNAVKDTR. A compositionally biased stretch (basic and acidic residues) spans 9–20; the sequence is IKRERNAVKDTR.

The protein belongs to the universal ribosomal protein uL22 family. As to quaternary structure, part of the 50S ribosomal subunit.

Functionally, this protein binds specifically to 23S rRNA; its binding is stimulated by other ribosomal proteins, e.g. L4, L17, and L20. It is important during the early stages of 50S assembly. It makes multiple contacts with different domains of the 23S rRNA in the assembled 50S subunit and ribosome. Its function is as follows. The globular domain of the protein is located near the polypeptide exit tunnel on the outside of the subunit, while an extended beta-hairpin is found that lines the wall of the exit tunnel in the center of the 70S ribosome. The sequence is that of Large ribosomal subunit protein uL22 from Lachnospira eligens (strain ATCC 27750 / DSM 3376 / VPI C15-48 / C15-B4) (Eubacterium eligens).